Here is a 355-residue protein sequence, read N- to C-terminus: Peptide chain release factor 1 (355 aa).

Gln-233 carries the post-translational modification N5-methylglutamine. The span at 281–293 (RRNKEQERADSRR) shows a compositional bias: basic and acidic residues. Residues 281 to 308 (RRNKEQERADSRRGQIGSGDRSERIRTY) are disordered.

It belongs to the prokaryotic/mitochondrial release factor family. In terms of processing, methylated by PrmC. Methylation increases the termination efficiency of RF1.

Its subcellular location is the cytoplasm. In terms of biological role, peptide chain release factor 1 directs the termination of translation in response to the peptide chain termination codons UAG and UAA. The sequence is that of Peptide chain release factor 1 from Rickettsia akari (strain Hartford).